Consider the following 487-residue polypeptide: N-succinylglutamate 5-semialdehyde dehydrogenase (487 aa).

Residue 221-226 coordinates NAD(+); sequence GSSRTG. Catalysis depends on residues glutamate 244 and cysteine 278.

This sequence belongs to the aldehyde dehydrogenase family. AstD subfamily.

It carries out the reaction N-succinyl-L-glutamate 5-semialdehyde + NAD(+) + H2O = N-succinyl-L-glutamate + NADH + 2 H(+). It functions in the pathway amino-acid degradation; L-arginine degradation via AST pathway; L-glutamate and succinate from L-arginine: step 4/5. In terms of biological role, catalyzes the NAD-dependent reduction of succinylglutamate semialdehyde into succinylglutamate. This is N-succinylglutamate 5-semialdehyde dehydrogenase from Pseudomonas putida (strain ATCC 700007 / DSM 6899 / JCM 31910 / BCRC 17059 / LMG 24140 / F1).